We begin with the raw amino-acid sequence, 59 residues long: Putative antitoxin AF_1090 (59 aa).

This sequence belongs to the UPF0165 family.

Possibly the antitoxin component of a type II toxin-antitoxin (TA) system. This is Putative antitoxin AF_1090 from Archaeoglobus fulgidus (strain ATCC 49558 / DSM 4304 / JCM 9628 / NBRC 100126 / VC-16).